Consider the following 194-residue polypeptide: Large ribosomal subunit protein bL9c (194 aa).

The transit peptide at 1 to 39 directs the protein to the chloroplast; sequence MASSTLSSLSSTPLQHSFAANLKTCSQFPNKSSGFMVFA.

It belongs to the bacterial ribosomal protein bL9 family. As to quaternary structure, part of the 50S ribosomal subunit.

It localises to the plastid. The protein resides in the chloroplast. In terms of biological role, binds to the 23S rRNA. This chain is Large ribosomal subunit protein bL9c (RPL9), found in Pisum sativum (Garden pea).